The sequence spans 468 residues: Lysosomal dipeptide transporter MFSD1 (468 aa).

The interval 1–25 (MEDEEEEARALLPGGSDEAGRETRA) is disordered. The Dileucine internalization motif motif lies at 11 to 12 (LL). The next 12 membrane-spanning stretches (helical) occupy residues 42–62 (LAHR…SYFC), 86–106 (LLYA…GFLI), 116–136 (TIIF…GGIF), 138–158 (AFWL…SLAV), 173–194 (LNLV…NMNL), 218–238 (LMIG…LAYL), 270–290 (WLIF…IGLV), 307–327 (AINS…GLLV), 334–354 (IIWV…LAFT), 364–384 (LLGL…AFVV), 395–415 (FMQS…GMIL), and 421–441 (LFLE…VVLL).

The protein belongs to the major facilitator superfamily. As to quaternary structure, homodimer. Interacts with lysosomal protein GLMP (via lumenal domain); the interaction starts while both proteins are still in the endoplasmic reticulum and is required for stabilization of MFSD1 in lysosomes but has no direct effect on its targeting to lysosomes or transporter activity.

It is found in the lysosome membrane. It carries out the reaction L-alpha-aminoacyl-L-arginine(out) = L-alpha-aminoacyl-L-arginine(in). It catalyses the reaction L-arginyl-L-alpha-amino acid(out) = L-arginyl-L-alpha-amino acid(in). The enzyme catalyses L-arginyl-glycine(out) = L-arginyl-glycine(in). The catalysed reaction is L-alpha-aminoacyl-L-lysine(out) = L-alpha-aminoacyl-L-lysine(in). It carries out the reaction L-aspartyl-L-lysine(out) = L-aspartyl-L-lysine(in). It catalyses the reaction L-alanyl-L-lysine(out) = L-alanyl-L-lysine(in). The enzyme catalyses L-lysyl-L-alpha-amino acid(out) = L-lysyl-L-alpha-amino acid(in). The catalysed reaction is L-lysyl-L-alanine(out) = L-lysyl-L-alanine(in). It carries out the reaction L-lysyl-L-lysine(out) = L-lysyl-L-lysine(in). It catalyses the reaction L-lysyl-glycine(out) = L-lysyl-glycine(in). The enzyme catalyses L-alpha-aminoacyl-L-histidine(out) = L-alpha-aminoacyl-L-histidine(in). The catalysed reaction is L-histidyl-L-alpha-amino acid(out) = L-histidyl-L-alpha-amino acid(in). It carries out the reaction L-histidyl-glycine(out) = L-histidyl-glycine(in). Lysosomal dipeptide uniporter that selectively exports lysine, arginine or histidine-containing dipeptides with a net positive charge from the lysosome lumen into the cytosol. Could play a role in a specific type of protein O-glycosylation indirectly regulating macrophages migration and tissue invasion. Also essential for liver homeostasis. The chain is Lysosomal dipeptide transporter MFSD1 from Bos taurus (Bovine).